A 362-amino-acid chain; its full sequence is Alternative oxidase, mitochondrial (362 aa).

The N-terminal 64 residues, 1 to 64 (MNTPKVNILH…RNFSTTSVTR (64 aa)), are a transit peptide targeting the mitochondrion. A helical membrane pass occupies residues 156–176 (LVRFIFLESIAGVPGMVAGML). Residues glutamate 163, glutamate 202, and histidine 205 each coordinate Fe cation. A helical transmembrane segment spans residues 222–242 (LILGAQGVFFNAMFLSYLISP). The Fe cation site is built by glutamate 253, glutamate 310, and histidine 313.

It belongs to the alternative oxidase family. In terms of assembly, homodimer; disulfide-linked. It depends on Fe cation as a cofactor.

It localises to the mitochondrion inner membrane. Its function is as follows. Catalyzes cyanide-resistant oxygen consumption. May increase respiration when the cytochrome respiratory pathway is restricted, or in response to low temperatures. The sequence is that of Alternative oxidase, mitochondrial (aod-1) from Neurospora crassa (strain ATCC 24698 / 74-OR23-1A / CBS 708.71 / DSM 1257 / FGSC 987).